We begin with the raw amino-acid sequence, 617 residues long: Proline--tRNA ligase (617 aa).

The protein belongs to the class-II aminoacyl-tRNA synthetase family. ProS type 1 subfamily. As to quaternary structure, homodimer.

The protein resides in the cytoplasm. The catalysed reaction is tRNA(Pro) + L-proline + ATP = L-prolyl-tRNA(Pro) + AMP + diphosphate. In terms of biological role, catalyzes the attachment of proline to tRNA(Pro) in a two-step reaction: proline is first activated by ATP to form Pro-AMP and then transferred to the acceptor end of tRNA(Pro). As ProRS can inadvertently accommodate and process non-cognate amino acids such as alanine and cysteine, to avoid such errors it has two additional distinct editing activities against alanine. One activity is designated as 'pretransfer' editing and involves the tRNA(Pro)-independent hydrolysis of activated Ala-AMP. The other activity is designated 'posttransfer' editing and involves deacylation of mischarged Ala-tRNA(Pro). The misacylated Cys-tRNA(Pro) is not edited by ProRS. This chain is Proline--tRNA ligase, found in Streptococcus pneumoniae (strain Hungary19A-6).